Consider the following 950-residue polypeptide: Protocadherin alpha-9 (950 aa).

The first 29 residues, 1 to 29 (MLYSSRGDPEGQPLLLSLLILAMWVVGSG), serve as a signal peptide directing secretion. Cadherin domains follow at residues 30–133 (QLHY…PPVF), 134–242 (PATQ…APVF), 243–350 (DRTL…APQL), 351–455 (TIKT…APAF), 456–565 (AQSE…APAL), and 588–678 (GVVV…APKS). Topologically, residues 30 to 697 (QLHYSVPEEA…GPEVTLVDVN (668 aa)) are extracellular. N-linked (GlcNAc...) asparagine glycans are attached at residues N254 and N265. Residue N548 is glycosylated (N-linked (GlcNAc...) asparagine). A helical transmembrane segment spans residues 698 to 718 (VYLIIAICAVSSLLVLTLLLY). The Cytoplasmic segment spans residues 719–950 (TVLRCSAMPT…GNSTTDNSDQ (232 aa)). The stretch at 734 to 737 (PGKP) is one PXXP 1 repeat. Positions 734 to 894 (PGKPTLVCSS…PDKFIIPGSP (161 aa)) are 5 X 4 AA repeats of P-X-X-P. Disordered stretches follow at residues 770 to 808 (MAFSPGLSPCAGSTERTGEPSASSDSTGKPRQPNPDWRY), 827 to 856 (ILRAGPGGPDQQWPTVSSATPEPEAGEVSP), and 871 to 950 (YGPG…NSDQ). Positions 789–798 (PSASSDSTGK) are enriched in polar residues. 4 PXXP repeats span residues 799–802 (PRQP), 832–835 (PGGP), 873–876 (PGNP), and 891–894 (PGSP). Basic and acidic residues predominate over residues 909-923 (DKSDFITFGKKEETK).

It is found in the cell membrane. Functionally, potential calcium-dependent cell-adhesion protein. May be involved in the establishment and maintenance of specific neuronal connections in the brain. This Homo sapiens (Human) protein is Protocadherin alpha-9 (PCDHA9).